The following is a 727-amino-acid chain: Malate synthase G (727 aa).

Residues V117, 124 to 125, S275, and R312 each bind acetyl-CoA; that span reads RY. R339 serves as the catalytic Proton acceptor. Glyoxylate contacts are provided by residues R339, E431, and 456-459; that span reads GFLD. The Mg(2+) site is built by E431 and D459. Position 540 (P540) interacts with acetyl-CoA. Residue C616 is modified to Cysteine sulfenic acid (-SOH). The Proton donor role is filled by D630.

Belongs to the malate synthase family. GlcB subfamily. In terms of assembly, monomer. It depends on Mg(2+) as a cofactor.

The protein resides in the cytoplasm. It catalyses the reaction glyoxylate + acetyl-CoA + H2O = (S)-malate + CoA + H(+). It participates in carbohydrate metabolism; glyoxylate cycle; (S)-malate from isocitrate: step 2/2. Involved in the glycolate utilization. Catalyzes the condensation and subsequent hydrolysis of acetyl-coenzyme A (acetyl-CoA) and glyoxylate to form malate and CoA. This Halalkalibacterium halodurans (strain ATCC BAA-125 / DSM 18197 / FERM 7344 / JCM 9153 / C-125) (Bacillus halodurans) protein is Malate synthase G.